Consider the following 206-residue polypeptide: Protein FAM228A (206 aa).

Belongs to the FAM228 family.

The polypeptide is Protein FAM228A (FAM228A) (Homo sapiens (Human)).